Consider the following 86-residue polypeptide: uncharacterized protein (86 aa).

The protein to M.jannaschii MJ1173.

This is an uncharacterized protein from Methanosarcina mazei (strain ATCC BAA-159 / DSM 3647 / Goe1 / Go1 / JCM 11833 / OCM 88) (Methanosarcina frisia).